Reading from the N-terminus, the 305-residue chain is Glutaminase (305 aa).

Substrate is bound by residues S63, N113, E158, N165, Y189, Y241, and V259.

Belongs to the glutaminase family. In terms of assembly, homotetramer.

It carries out the reaction L-glutamine + H2O = L-glutamate + NH4(+). The protein is Glutaminase of Aliarcobacter butzleri (strain RM4018) (Arcobacter butzleri).